A 45-amino-acid polypeptide reads, in one-letter code: uncharacterized protein (45 aa).

Basic and acidic residues predominate over residues 1-26 (MIMGKDRQEKKLKASGRVESDRDQSI). Positions 1–45 (MIMGKDRQEKKLKASGRVESDRDQSIHYDGATSLEQNGRFKKRKS) are disordered.

This is an uncharacterized protein from Bacillus subtilis (strain 168).